The primary structure comprises 324 residues: D-alanine--D-alanine ligase (324 aa).

Residues 120–322 form the ATP-grasp domain; that stretch reads NNYLRGFGVE…LKEILTEIIE (203 aa). Position 149–204 (149–204) interacts with ATP; the sequence is IDKLGLPLIVKPNDGGSSFGVTKVTNITQIQLAIRNAFNEGEGVLIESFIPGTEIT. Residues aspartate 276, glutamate 289, and asparagine 291 each contribute to the Mg(2+) site.

It belongs to the D-alanine--D-alanine ligase family. The cofactor is Mg(2+). It depends on Mn(2+) as a cofactor.

It localises to the cytoplasm. The catalysed reaction is 2 D-alanine + ATP = D-alanyl-D-alanine + ADP + phosphate + H(+). It functions in the pathway cell wall biogenesis; peptidoglycan biosynthesis. Functionally, cell wall formation. The sequence is that of D-alanine--D-alanine ligase from Azobacteroides pseudotrichonymphae genomovar. CFP2.